A 696-amino-acid chain; its full sequence is Equisetin cluster transcription factor eqxF (696 aa).

2 disordered regions span residues 1–24 (MADQ…GRAR) and 73–117 (NQEQ…PADY).

It localises to the nucleus. Its function is as follows. Transcription factor that regulates the expression of the gene cluster that mediates the biosynthesis of Equisetin. This Fusarium heterosporum protein is Equisetin cluster transcription factor eqxF.